Consider the following 393-residue polypeptide: Beta-1,3-galactosyltransferase 7 (393 aa).

A helical; Signal-anchor for type II membrane protein transmembrane segment spans residues 9 to 29; that stretch reads VISLKWVPFLCISFFALGAIF. Residues 89–112 form a disordered region; it reads SLDKSVSTLSSTRSSQEMVDGSET. Low complexity predominate over residues 93–103; it reads SVSTLSSTRSS.

It belongs to the glycosyltransferase 31 family. The cofactor is Mn(2+). Expressed in leaves, stems, flowers and siliques.

Its subcellular location is the golgi apparatus membrane. It participates in protein modification; protein glycosylation. Its function is as follows. Beta-1,3-galactosyltransferase that transfers galactose from UDP-galactose to substrates with a terminal glycosyl residue. The sequence is that of Beta-1,3-galactosyltransferase 7 (B3GALT7) from Arabidopsis thaliana (Mouse-ear cress).